Reading from the N-terminus, the 158-residue chain is 2-C-methyl-D-erythritol 2,4-cyclodiphosphate synthase (158 aa).

A divalent metal cation-binding residues include Asp-8 and His-10. Residues 8-10 (DVH) and 34-35 (HS) each bind 4-CDP-2-C-methyl-D-erythritol 2-phosphate. A divalent metal cation is bound at residue His-42. 4-CDP-2-C-methyl-D-erythritol 2-phosphate contacts are provided by residues 56–58 (DIG), 61–65 (FPDTD), 100–106 (AQRPKMA), 132–135 (TTEE), Phe-139, and Arg-142.

This sequence belongs to the IspF family. As to quaternary structure, homotrimer. Requires a divalent metal cation as cofactor.

The catalysed reaction is 4-CDP-2-C-methyl-D-erythritol 2-phosphate = 2-C-methyl-D-erythritol 2,4-cyclic diphosphate + CMP. It functions in the pathway isoprenoid biosynthesis; isopentenyl diphosphate biosynthesis via DXP pathway; isopentenyl diphosphate from 1-deoxy-D-xylulose 5-phosphate: step 4/6. Functionally, involved in the biosynthesis of isopentenyl diphosphate (IPP) and dimethylallyl diphosphate (DMAPP), two major building blocks of isoprenoid compounds. Catalyzes the conversion of 4-diphosphocytidyl-2-C-methyl-D-erythritol 2-phosphate (CDP-ME2P) to 2-C-methyl-D-erythritol 2,4-cyclodiphosphate (ME-CPP) with a corresponding release of cytidine 5-monophosphate (CMP). The sequence is that of 2-C-methyl-D-erythritol 2,4-cyclodiphosphate synthase from Pelobacter propionicus (strain DSM 2379 / NBRC 103807 / OttBd1).